The chain runs to 412 residues: tRNA pseudouridine synthase Pus10 (412 aa).

Residues 73-197 (HEPSIKFLSN…TGSVEVQIMP (125 aa)) form the THUMP domain. 2 residues coordinate substrate: tyrosine 308 and tyrosine 376.

Belongs to the pseudouridine synthase Pus10 family.

The enzyme catalyses uridine(54) in tRNA = pseudouridine(54) in tRNA. It carries out the reaction uridine(55) in tRNA = pseudouridine(55) in tRNA. Responsible for synthesis of pseudouridine from uracil-54 and uracil-55 in the psi GC loop of transfer RNAs. The chain is tRNA pseudouridine synthase Pus10 from Vulcanisaeta distributa (strain DSM 14429 / JCM 11212 / NBRC 100878 / IC-017).